A 219-amino-acid chain; its full sequence is Deoxyribose-phosphate aldolase (219 aa).

The Proton donor/acceptor role is filled by Asp-89. Catalysis depends on Lys-151, which acts as the Schiff-base intermediate with acetaldehyde. Lys-180 acts as the Proton donor/acceptor in catalysis.

It belongs to the DeoC/FbaB aldolase family. DeoC type 1 subfamily.

The protein localises to the cytoplasm. It catalyses the reaction 2-deoxy-D-ribose 5-phosphate = D-glyceraldehyde 3-phosphate + acetaldehyde. The protein operates within carbohydrate degradation; 2-deoxy-D-ribose 1-phosphate degradation; D-glyceraldehyde 3-phosphate and acetaldehyde from 2-deoxy-alpha-D-ribose 1-phosphate: step 2/2. Catalyzes a reversible aldol reaction between acetaldehyde and D-glyceraldehyde 3-phosphate to generate 2-deoxy-D-ribose 5-phosphate. In Coprothermobacter proteolyticus (strain ATCC 35245 / DSM 5265 / OCM 4 / BT), this protein is Deoxyribose-phosphate aldolase.